A 279-amino-acid chain; its full sequence is MREPQRSRIGVFDSGVGGLTVLRELYRQLPKESILYFGDTARLPYGKRSPQVILQYVREILTWMAAEEVKMVIMACNTSSALALETVQQEFNMPILGVILPGARAAVRQGRRIGVISTPATAASNAYRHAIHEITPDALVWQMACPEFVPLIEQNRLHDPYTLEVAKGYLQPLLDADIDTLVFGCTHYRHLTPVFQQILPSHIRLVDPASHVVKAARQELEVMGLRNSEMSIATRFTVSGCPQQFAELSHQWLGFTPMVEKISLPCLSSICPQPLEIRE.

Residues 13-14 and 45-46 contribute to the substrate site; these read DS and YG. The active-site Proton donor/acceptor is Cys76. Position 77–78 (77–78) interacts with substrate; it reads NT. The active-site Proton donor/acceptor is the Cys185. 186–187 contacts substrate; the sequence is TH.

The protein belongs to the aspartate/glutamate racemases family.

The enzyme catalyses L-glutamate = D-glutamate. The protein operates within cell wall biogenesis; peptidoglycan biosynthesis. In terms of biological role, provides the (R)-glutamate required for cell wall biosynthesis. The sequence is that of Glutamate racemase from Synechocystis sp. (strain ATCC 27184 / PCC 6803 / Kazusa).